The sequence spans 141 residues: ATP synthase F(0) complex subunit C3, mitochondrial (141 aa).

The transit peptide at 1 to 66 (MFACAKLACT…REFQTTAVNR (66 aa)) directs the protein to the mitochondrion. Residues 82–102 (VGVAGSGAGIGTVFGSLIIGY) traverse the membrane as a helical segment. Position 109 is an N6,N6,N6-trimethyllysine (Lys109). The helical transmembrane segment at 117–137 (ILGFALSEAMGLFCLMVAFLI) threads the bilayer.

The protein belongs to the ATPase C chain family. F-type ATPases have 2 components, CF(1) - the catalytic core - and CF(0) - the membrane proton channel. CF(1) has five subunits: alpha(3), beta(3), gamma(1), delta(1), epsilon(1). CF(0) has three main subunits: a, b and c. Interacts with TMEM70 and TMEM242. In terms of processing, trimethylated by ATPSCKMT at Lys-109. Methylation is required for proper incorporation of the C subunit into the ATP synthase complex and mitochondrial respiration.

The protein resides in the mitochondrion membrane. In terms of biological role, mitochondrial membrane ATP synthase (F(1)F(0) ATP synthase or Complex V) produces ATP from ADP in the presence of a proton gradient across the membrane which is generated by electron transport complexes of the respiratory chain. F-type ATPases consist of two structural domains, F(1) - containing the extramembraneous catalytic core and F(0) - containing the membrane proton channel, linked together by a central stalk and a peripheral stalk. During catalysis, ATP synthesis in the catalytic domain of F(1) is coupled via a rotary mechanism of the central stalk subunits to proton translocation. Part of the complex F(0) domain. A homomeric c-ring of probably 10 subunits is part of the complex rotary element. The polypeptide is ATP synthase F(0) complex subunit C3, mitochondrial (Bos taurus (Bovine)).